The sequence spans 185 residues: Large ribosomal subunit protein uL5 (185 aa).

The protein belongs to the universal ribosomal protein uL5 family. Part of the 50S ribosomal subunit; part of the 5S rRNA/L5/L18/L25 subcomplex. Contacts the 5S rRNA and the P site tRNA. Forms a bridge to the 30S subunit in the 70S ribosome.

This is one of the proteins that bind and probably mediate the attachment of the 5S RNA into the large ribosomal subunit, where it forms part of the central protuberance. In the 70S ribosome it contacts protein S13 of the 30S subunit (bridge B1b), connecting the 2 subunits; this bridge is implicated in subunit movement. Contacts the P site tRNA; the 5S rRNA and some of its associated proteins might help stabilize positioning of ribosome-bound tRNAs. This chain is Large ribosomal subunit protein uL5, found in Bacteroides thetaiotaomicron (strain ATCC 29148 / DSM 2079 / JCM 5827 / CCUG 10774 / NCTC 10582 / VPI-5482 / E50).